A 144-amino-acid chain; its full sequence is HTH-type transcriptional regulator LrpC (144 aa).

An HTH asnC-type domain is found at 3 to 64 (LDQIDLNIIE…EVDQKKLGLP (62 aa)). Residues 22 to 41 (MRELGRKIKLSPPSVTERVR) constitute a DNA-binding region (H-T-H motif).

In terms of biological role, transcriptional regulator with a possible role in regulation of amino acid metabolism. Plays a role in the growth phase transition. The polypeptide is HTH-type transcriptional regulator LrpC (lrpC) (Bacillus subtilis (strain 168)).